A 336-amino-acid polypeptide reads, in one-letter code: MLVLGIETSCDETAAAIVKDGREVLSNIVYSQIEIHNQFGGVVPEIASRKHVEKISYVADMALKEADIDIDKIDAVAATYGPGLVGSLLVGLSFAKALSYARKIPFIAINHIEGHIYANFITYPKLKPPLIVLVVSGGHTNLIILEDFDRYEVVGKTRDDAAGEAFDKIARYLGLGYPGGPAIDKVARHGDEEKYKYPLADVEGYNFSFSGLKSAVINHVHTLNQRRENFKVEDVAASFQKAVVDTLVEKTIKLSLESNIKRVAIAGGVAANSKLREELSKRCSEHQIEFYVPDFKYCTDNAAMIASAGYFKLIKGQTSSYSTNAVPYISLVSKKE.

Fe cation-binding residues include H111 and H115. Substrate is bound by residues 134 to 138 (VVSGG), D167, G180, D184, and N272. Position 300 (D300) interacts with Fe cation.

The protein belongs to the KAE1 / TsaD family. Fe(2+) serves as cofactor.

The protein localises to the cytoplasm. The enzyme catalyses L-threonylcarbamoyladenylate + adenosine(37) in tRNA = N(6)-L-threonylcarbamoyladenosine(37) in tRNA + AMP + H(+). Functionally, required for the formation of a threonylcarbamoyl group on adenosine at position 37 (t(6)A37) in tRNAs that read codons beginning with adenine. Is involved in the transfer of the threonylcarbamoyl moiety of threonylcarbamoyl-AMP (TC-AMP) to the N6 group of A37, together with TsaE and TsaB. TsaD likely plays a direct catalytic role in this reaction. This chain is tRNA N6-adenosine threonylcarbamoyltransferase, found in Caldicellulosiruptor saccharolyticus (strain ATCC 43494 / DSM 8903 / Tp8T 6331).